A 371-amino-acid polypeptide reads, in one-letter code: Capsular polysaccharide phosphotransferase cps12A (371 aa).

The protein belongs to the stealth family.

Functionally, part of a capsular polysaccharide synthesis locus. This Actinobacillus pleuropneumoniae (Haemophilus pleuropneumoniae) protein is Capsular polysaccharide phosphotransferase cps12A (cps12A).